The sequence spans 569 residues: Glycylpeptide N-tetradecanoyltransferase (569 aa).

The span at 1 to 18 shows a compositional bias: basic and acidic residues; it reads MPPTEESKPVDPAQEKQA. The tract at residues 1 to 82 is disordered; the sequence is MPPTEESKPV…STESSAEVGL (82 aa). Basic residues predominate over residues 55 to 68; it reads TKKKNKKKSKKKNK. Tetradecanoyl-CoA-binding positions include 158 to 161, 291 to 293, and 299 to 303; these read YKFW, LCI, and GKRLA. Valine 569 serves as the catalytic Proton acceptor; via carboxylate.

It belongs to the NMT family. Monomer.

It localises to the cytoplasm. It catalyses the reaction N-terminal glycyl-[protein] + tetradecanoyl-CoA = N-tetradecanoylglycyl-[protein] + CoA + H(+). In terms of biological role, adds a myristoyl group to the N-terminal glycine residue of certain cellular proteins. This Neurospora crassa (strain ATCC 24698 / 74-OR23-1A / CBS 708.71 / DSM 1257 / FGSC 987) protein is Glycylpeptide N-tetradecanoyltransferase (gtt-1).